The chain runs to 579 residues: General transcription and DNA repair factor IIH subunit TFB1-3 (579 aa).

BSD domains are found at residues 107-161 (LTPA…GKDS) and 186-238 (RTNR…YLYS).

Belongs to the TFB1 family. As to quaternary structure, component of the 7-subunit TFIIH core complex composed of XPB, XPD, TFB1/GTF2H1, GTF2H2/P44, TFB4/GTF2H3, TFB2/GTF2H4 and TFB5/GTF2H5, which is active in NER. The core complex associates with the 3-subunit CDK-activating kinase (CAK) module composed of CYCH1/cyclin H1, CDKD and MAT1/At4g30820 to form the 10-subunit holoenzyme (holo-TFIIH) active in transcription.

The protein localises to the nucleus. Component of the general transcription and DNA repair factor IIH (TFIIH) core complex, which is involved in general and transcription-coupled nucleotide excision repair (NER) of damaged DNA and, when complexed to CAK, in RNA transcription by RNA polymerase II. In NER, TFIIH acts by opening DNA around the lesion to allow the excision of the damaged oligonucleotide and its replacement by a new DNA fragment. In transcription, TFIIH has an essential role in transcription initiation. When the pre-initiation complex (PIC) has been established, TFIIH is required for promoter opening and promoter escape. Phosphorylation of the C-terminal tail (CTD) of the largest subunit of RNA polymerase II by the kinase module CAK controls the initiation of transcription. This is General transcription and DNA repair factor IIH subunit TFB1-3 from Arabidopsis thaliana (Mouse-ear cress).